A 92-amino-acid chain; its full sequence is Small ribosomal subunit protein uS19 (92 aa).

Protein S19 forms a complex with S13 that binds strongly to the 16S ribosomal RNA. This Rhodopseudomonas palustris (strain ATCC BAA-98 / CGA009) protein is Small ribosomal subunit protein uS19.